A 401-amino-acid polypeptide reads, in one-letter code: Argininosuccinate synthase (401 aa).

Residue alanine 9–serine 17 participates in ATP binding. L-citrulline is bound at residue tyrosine 87. An ATP-binding site is contributed by glycine 117. L-aspartate contacts are provided by threonine 119, asparagine 123, and aspartate 124. Asparagine 123 lines the L-citrulline pocket. Positions 127, 176, 185, 261, and 273 each coordinate L-citrulline.

This sequence belongs to the argininosuccinate synthase family. Type 1 subfamily. Homotetramer.

It localises to the cytoplasm. It catalyses the reaction L-citrulline + L-aspartate + ATP = 2-(N(omega)-L-arginino)succinate + AMP + diphosphate + H(+). It functions in the pathway amino-acid biosynthesis; L-arginine biosynthesis; L-arginine from L-ornithine and carbamoyl phosphate: step 2/3. The chain is Argininosuccinate synthase from Prosthecochloris aestuarii (strain DSM 271 / SK 413).